Here is a 237-residue protein sequence, read N- to C-terminus: D-aminoacyl-tRNA deacylase (237 aa).

This sequence belongs to the DtdA deacylase family. In terms of assembly, monomer. The cofactor is Zn(2+).

The enzyme catalyses a D-aminoacyl-tRNA + H2O = a tRNA + a D-alpha-amino acid + H(+). It carries out the reaction glycyl-tRNA(Ala) + H2O = tRNA(Ala) + glycine + H(+). Its function is as follows. D-aminoacyl-tRNA deacylase with broad substrate specificity. By recycling D-aminoacyl-tRNA to D-amino acids and free tRNA molecules, this enzyme counteracts the toxicity associated with the formation of D-aminoacyl-tRNA entities in vivo. This chain is D-aminoacyl-tRNA deacylase, found in Metallosphaera sedula (strain ATCC 51363 / DSM 5348 / JCM 9185 / NBRC 15509 / TH2).